Reading from the N-terminus, the 932-residue chain is DNA mismatch repair protein MutS (932 aa).

620 to 627 (GPNMAGKS) serves as a coordination point for ATP.

This sequence belongs to the DNA mismatch repair MutS family.

This protein is involved in the repair of mismatches in DNA. It is possible that it carries out the mismatch recognition step. This protein has a weak ATPase activity. The sequence is that of DNA mismatch repair protein MutS from Lachnoclostridium phytofermentans (strain ATCC 700394 / DSM 18823 / ISDg) (Clostridium phytofermentans).